The sequence spans 281 residues: Probable feruloyl esterase A (281 aa).

A signal peptide spans 1 to 21; the sequence is MKNFVSMHAILLACSAGAGLA. 3 disulfide bridges follow: Cys50–Cys279, Cys112–Cys115, and Cys248–Cys255. Substrate is bound at residue Asp98. An N-linked (GlcNAc...) asparagine glycan is attached at Asn100. Tyr101 provides a ligand contact to substrate. The active-site Nucleophile is Ser154. A glycan (N-linked (GlcNAc...) asparagine) is linked at Asn173. Asp215 serves as the catalytic Charge relay system. Residue His268 coordinates substrate. The Charge relay system role is filled by His268.

This sequence belongs to the AB hydrolase superfamily. FaeA family.

The protein resides in the secreted. It carries out the reaction feruloyl-polysaccharide + H2O = ferulate + polysaccharide.. Involved in degradation of plant cell walls. Hydrolyzes the feruloyl-arabinose ester bond in arabinoxylans, and the feruloyl-galactose ester bond in pectin. This Aspergillus flavus (strain ATCC 200026 / FGSC A1120 / IAM 13836 / NRRL 3357 / JCM 12722 / SRRC 167) protein is Probable feruloyl esterase A (faeA).